Reading from the N-terminus, the 98-residue chain is NADH-ubiquinone oxidoreductase chain 4L (98 aa).

A run of 3 helical transmembrane segments spans residues 2-22, 26-46, and 59-79; these read QMTMINMILAFIMATTGLLMF, FMSSLLCLEGMMLSIFILMSI, and FPLVLLVFAACEAAIGLSLLV.

Belongs to the complex I subunit 4L family. Core subunit of respiratory chain NADH dehydrogenase (Complex I) which is composed of 45 different subunits.

It localises to the mitochondrion inner membrane. The enzyme catalyses a ubiquinone + NADH + 5 H(+)(in) = a ubiquinol + NAD(+) + 4 H(+)(out). In terms of biological role, core subunit of the mitochondrial membrane respiratory chain NADH dehydrogenase (Complex I) which catalyzes electron transfer from NADH through the respiratory chain, using ubiquinone as an electron acceptor. Part of the enzyme membrane arm which is embedded in the lipid bilayer and involved in proton translocation. The chain is NADH-ubiquinone oxidoreductase chain 4L (MT-ND4L) from Echinosorex gymnura (Moon rat).